The sequence spans 70 residues: Probable rubredoxin HupI (70 aa).

In terms of domain architecture, Rubredoxin-like spans 15 to 66 (DDRMECGICWHVYDPAEGDPVWQIPPGTPFSNLTEDWRCPNCDALQSKFMRL). Positions 20, 23, 53, and 56 each coordinate Fe cation.

Belongs to the rubredoxin family. Fe(3+) is required as a cofactor.

Functionally, could be an electron transport intermediate in hydrogen oxidation. The protein is Probable rubredoxin HupI (hupI) of Rhizobium leguminosarum bv. viciae.